A 361-amino-acid polypeptide reads, in one-letter code: UDP-3-O-acylglucosamine N-acyltransferase (361 aa).

Residue His264 is the Proton acceptor of the active site.

The protein belongs to the transferase hexapeptide repeat family. LpxD subfamily. In terms of assembly, homotrimer.

The catalysed reaction is a UDP-3-O-[(3R)-3-hydroxyacyl]-alpha-D-glucosamine + a (3R)-hydroxyacyl-[ACP] = a UDP-2-N,3-O-bis[(3R)-3-hydroxyacyl]-alpha-D-glucosamine + holo-[ACP] + H(+). It participates in bacterial outer membrane biogenesis; LPS lipid A biosynthesis. Catalyzes the N-acylation of UDP-3-O-acylglucosamine using 3-hydroxyacyl-ACP as the acyl donor. Is involved in the biosynthesis of lipid A, a phosphorylated glycolipid that anchors the lipopolysaccharide to the outer membrane of the cell. This is UDP-3-O-acylglucosamine N-acyltransferase from Bordetella avium (strain 197N).